Here is a 116-residue protein sequence, read N- to C-terminus: Large ribosomal subunit protein uL22 (116 aa).

Belongs to the universal ribosomal protein uL22 family. In terms of assembly, part of the 50S ribosomal subunit.

In terms of biological role, this protein binds specifically to 23S rRNA; its binding is stimulated by other ribosomal proteins, e.g. L4, L17, and L20. It is important during the early stages of 50S assembly. It makes multiple contacts with different domains of the 23S rRNA in the assembled 50S subunit and ribosome. The globular domain of the protein is located near the polypeptide exit tunnel on the outside of the subunit, while an extended beta-hairpin is found that lines the wall of the exit tunnel in the center of the 70S ribosome. In Orientia tsutsugamushi (strain Boryong) (Rickettsia tsutsugamushi), this protein is Large ribosomal subunit protein uL22.